The primary structure comprises 242 residues: Probable transcriptional regulatory protein lhv_0777 (242 aa).

Residues 1–22 (MSGHSKWHNIQGRKNAQDAKRG) are disordered.

It belongs to the TACO1 family.

The protein resides in the cytoplasm. This is Probable transcriptional regulatory protein lhv_0777 from Lactobacillus helveticus (strain DPC 4571).